The chain runs to 1049 residues: Probable ATP-dependent permease (1049 aa).

The signal sequence occupies residues 1-25 (MGSHRRYLYYSILSFLLLSCSVVLA). Residues 26–324 (KQDKTPFFEG…KDPTVSWQGK (299 aa)) lie on the Lumenal side of the membrane. N-linked (GlcNAc...) asparagine glycosylation is found at N50, N114, N165, and N221. A helical transmembrane segment spans residues 325–345 (LVLALTAVMVLALFTFATFYI). The Cytoplasmic portion of the chain corresponds to 346 to 463 (SKSPLFRNGL…ISMDRKSFSK (118 aa)). The ABC transporter domain occupies 384–631 (LSFENITYSV…LRNEGYICPD (248 aa)). ATP is bound at residue 423 to 430 (GGSGAGKT). A helical membrane pass occupies residues 464-481 (IIGFVDQDDFLLPTLTVF). Residues 482–793 (ETVLNSALLR…SFKNMYRNPK (312 aa)) are Lumenal-facing. Residues S659 and S702 each carry the phosphoserine modification. Residues 793–1044 (KLLLGNYLLT…IMGYLALKWI (252 aa)) form the ABC transmembrane type-2 domain. A helical membrane pass occupies residues 794 to 814 (LLLGNYLLTILLSLFLGTLYY). Topologically, residues 815-828 (NVSNDISGFQNRMG) are cytoplasmic. Residues 829-849 (LFFFILTYFGFVTFTGLSSFA) form a helical membrane-spanning segment. Topologically, residues 850–877 (LERIIFIKERSNNYYSPLAYYISKIMSE) are lumenal. Residues 878–898 (VVPLRVVPPILLSLIVYPMTG) form a helical membrane-spanning segment. Over 899 to 909 (LNMKDNAFFKC) the chain is Cytoplasmic. A helical membrane pass occupies residues 910–930 (IGILILFNLGISLEILTIGII). Residues 931–937 (FEDLNNS) lie on the Lumenal side of the membrane. N935 carries an N-linked (GlcNAc...) asparagine glycan. The helical transmembrane segment at 938–958 (IILSVLVLLGSLLFSGLFINT) threads the bilayer. Residues 959–1000 (KNITNVAFKYLKNFSVFYYAYESLLINEVKTLMLKERKYGLN) are Cytoplasmic-facing. The chain crosses the membrane as a helical span at residues 1001–1021 (IEVPGATILSTFGFVVQNLVF). Over 1022–1024 (DIK) the chain is Lumenal. A helical transmembrane segment spans residues 1025–1045 (ILALFNVVFLIMGYLALKWIV). At 1046 to 1049 (VEQK) the chain is on the cytoplasmic side.

It belongs to the ABC transporter superfamily. ABCG family. Eye pigment precursor importer (TC 3.A.1.204) subfamily.

The protein resides in the endoplasmic reticulum membrane. The chain is Probable ATP-dependent permease (ADP1) from Saccharomyces cerevisiae (strain ATCC 204508 / S288c) (Baker's yeast).